Consider the following 517-residue polypeptide: Probable cytosol aminopeptidase (517 aa).

2 residues coordinate Mn(2+): Lys279 and Asp284. The active site involves Lys291. Mn(2+) contacts are provided by Asp302, Asp361, and Glu363. Arg365 is a catalytic residue.

The protein belongs to the peptidase M17 family. Requires Mn(2+) as cofactor.

It localises to the cytoplasm. The enzyme catalyses Release of an N-terminal amino acid, Xaa-|-Yaa-, in which Xaa is preferably Leu, but may be other amino acids including Pro although not Arg or Lys, and Yaa may be Pro. Amino acid amides and methyl esters are also readily hydrolyzed, but rates on arylamides are exceedingly low.. It catalyses the reaction Release of an N-terminal amino acid, preferentially leucine, but not glutamic or aspartic acids.. In terms of biological role, presumably involved in the processing and regular turnover of intracellular proteins. Catalyzes the removal of unsubstituted N-terminal amino acids from various peptides. This is Probable cytosol aminopeptidase from Streptomyces coelicolor (strain ATCC BAA-471 / A3(2) / M145).